Consider the following 135-residue polypeptide: Crustacean hyperglycemic hormones A* (135 aa).

Positions 1–26 are cleaved as a signal peptide; it reads MVSFRTMWSVVVVVVVASLASSGVQG. Pyrrolidone carboxylic acid is present on glutamine 62. Cystine bridges form between cysteine 68/cysteine 104, cysteine 84/cysteine 100, and cysteine 87/cysteine 113. At valine 133 the chain carries Valine amide.

Belongs to the arthropod CHH/MIH/GIH/VIH hormone family. As to expression, produced by the medulla terminalis X-organ in the eyestalks and transported to the sinus gland where they are stored and released.

Its subcellular location is the secreted. Its function is as follows. Hormone found in the sinus gland of isopods and decapods which controls the blood sugar level. Has a secretagogue action over the amylase released from the midgut gland. May act as a stress hormone and may be involved in the control of molting and reproduction. This chain is Crustacean hyperglycemic hormones A* (CHHA*), found in Faxonius limosus (Spinycheek crayfish).